The chain runs to 461 residues: Phosphoglycerate kinase, chloroplastic (461 aa).

A chloroplast-targeting transit peptide spans 1-60 (MALSMKMRANARVSGRRVAAVAPRVVPFSSASSSVLRSGFALRCLWTSAAWAALASVVEA). (2R)-3-phosphoglycerate is bound by residues alanine 82, aspartate 83, asparagine 85, arginine 100, serine 122, histidine 123, glycine 125, arginine 126, arginine 182, histidine 214, and arginine 215. Glycine 260 contributes to the ADP binding site. A CDP-binding site is contributed by glycine 260. Lysine 262 and lysine 266 together coordinate AMP. Position 266 (lysine 266) interacts with ATP. Residue glycine 284 participates in ADP binding. Glycine 284 serves as a coordination point for CDP. 2 residues coordinate AMP: glycine 285 and glycine 357. The ATP site is built by glycine 285 and glycine 357. 2 residues coordinate CDP: glycine 382 and phenylalanine 387. ADP is bound at residue phenylalanine 387. Position 388 (glutamate 388) interacts with AMP. ATP is bound by residues glutamate 388, aspartate 419, and serine 420. A Mg(2+)-binding site is contributed by aspartate 419.

It belongs to the phosphoglycerate kinase family. Monomer. It depends on Mg(2+) as a cofactor.

The protein localises to the plastid. The protein resides in the chloroplast. It catalyses the reaction (2R)-3-phosphoglycerate + ATP = (2R)-3-phospho-glyceroyl phosphate + ADP. It functions in the pathway carbohydrate biosynthesis; Calvin cycle. The chain is Phosphoglycerate kinase, chloroplastic from Chlamydomonas reinhardtii (Chlamydomonas smithii).